The primary structure comprises 107 residues: Nucleoid-associated protein HNE_0371 (107 aa).

This sequence belongs to the YbaB/EbfC family. As to quaternary structure, homodimer.

The protein resides in the cytoplasm. Its subcellular location is the nucleoid. In terms of biological role, binds to DNA and alters its conformation. May be involved in regulation of gene expression, nucleoid organization and DNA protection. The chain is Nucleoid-associated protein HNE_0371 from Hyphomonas neptunium (strain ATCC 15444).